Consider the following 917-residue polypeptide: Chitin synthase 1 (917 aa).

The segment covering Met-1–Asp-11 has biased composition (basic and acidic residues). The tract at residues Met-1 to Arg-56 is disordered. Topologically, residues Met-1–Met-570 are extracellular. The N-linked (GlcNAc...) asparagine glycan is linked to Asn-544. The helical transmembrane segment at Phe-571–Leu-591 threads the bilayer. The Cytoplasmic segment spans residues Ala-592 to Pro-629. The helical transmembrane segment at Phe-630–Ala-650 threads the bilayer. At Leu-651–Thr-664 the chain is on the extracellular side. Residues Ser-665 to Ala-685 form a helical membrane-spanning segment. Topologically, residues Arg-686–Gly-716 are cytoplasmic. A helical transmembrane segment spans residues Val-717–Leu-737. Residues Asp-738 to His-744 are Extracellular-facing. The chain crosses the membrane as a helical span at residues Ser-745 to Phe-765. At Asn-766 to Arg-843 the chain is on the cytoplasmic side. The helical transmembrane segment at Thr-844–Asp-864 threads the bilayer. At Asn-865–Lys-884 the chain is on the extracellular side. A helical membrane pass occupies residues Phe-885 to Leu-905. Over Gly-906–Arg-917 the chain is Cytoplasmic.

The protein belongs to the chitin synthase family. Class III subfamily.

The protein localises to the cell membrane. The enzyme catalyses [(1-&gt;4)-N-acetyl-beta-D-glucosaminyl](n) + UDP-N-acetyl-alpha-D-glucosamine = [(1-&gt;4)-N-acetyl-beta-D-glucosaminyl](n+1) + UDP + H(+). Its function is as follows. Polymerizes chitin, a structural polymer of the cell wall and septum, by transferring the sugar moiety of UDP-GlcNAc to the non-reducing end of the growing chitin polymer. This chain is Chitin synthase 1 (chs-1), found in Neurospora crassa (strain ATCC 24698 / 74-OR23-1A / CBS 708.71 / DSM 1257 / FGSC 987).